Reading from the N-terminus, the 352-residue chain is Uroporphyrinogen decarboxylase (352 aa).

Residues 27-31 (RQAGR), D77, Y154, T209, and H325 each bind substrate.

Belongs to the uroporphyrinogen decarboxylase family. In terms of assembly, homodimer.

Its subcellular location is the cytoplasm. It carries out the reaction uroporphyrinogen III + 4 H(+) = coproporphyrinogen III + 4 CO2. It functions in the pathway porphyrin-containing compound metabolism; protoporphyrin-IX biosynthesis; coproporphyrinogen-III from 5-aminolevulinate: step 4/4. Its function is as follows. Catalyzes the decarboxylation of four acetate groups of uroporphyrinogen-III to yield coproporphyrinogen-III. This is Uroporphyrinogen decarboxylase from Legionella pneumophila subsp. pneumophila (strain Philadelphia 1 / ATCC 33152 / DSM 7513).